Consider the following 500-residue polypeptide: L-arabinose isomerase (500 aa).

The Mn(2+) site is built by E306, E333, H350, and H450.

This sequence belongs to the arabinose isomerase family. As to quaternary structure, homohexamer. Mn(2+) is required as a cofactor.

It carries out the reaction beta-L-arabinopyranose = L-ribulose. It functions in the pathway carbohydrate degradation; L-arabinose degradation via L-ribulose; D-xylulose 5-phosphate from L-arabinose (bacterial route): step 1/3. Functionally, catalyzes the conversion of L-arabinose to L-ribulose. This Escherichia coli (strain K12) protein is L-arabinose isomerase (araA).